The primary structure comprises 134 residues: Natriuretic peptides B (134 aa).

The first 26 residues, 1-26 (MDPQTAPSRALLLLLFLHLAFLGGRS), serve as a signal peptide directing secretion. The O-linked (Xyl...) (chondroitin sulfate) serine glycan is linked to serine 41. O-linked (HexNAc...) threonine; Partial glycosylation occurs at threonine 62. 2 O-linked (HexNAc...) serine glycosylation sites follow: serine 63 and serine 70. O-linked (HexNAc...) threonine glycosylation is present at threonine 74. Serine 79 is a glycosylation site (O-linked (HexNAc...) serine). Threonine 84 carries O-linked (HexNAc...) threonine; Partial glycosylation. Residue threonine 97 is glycosylated (O-linked (HexNAc...) threonine). Cysteine 112 and cysteine 128 are disulfide-bonded.

The protein belongs to the natriuretic peptide family. The precursor molecule is proteolytically cleaved by the endoproteases FURIN or CORIN at Arg-102 to produce brain natriuretic peptide 32 and NT-proBNP. This likely occurs after it has been secreted into the blood, either during circulation or in the target cells. CORIN also cleaves the precursor molecule at additional residues including Arg-99 and possibly Lys-105. In patients with heart failure, processing and degradation of natriuretic peptides B occurs but is delayed, possibly due to a decrease in enzyme level or activity of CORIN and DPP4. Post-translationally, undergoes further proteolytic cleavage by various proteases such as DPP4, MME and possibly FAP, to give rise to a variety of shorter peptides. Cleaved at Pro-104 by the prolyl endopeptidase FAP (seprase) activity (in vitro). Degraded by IDE. During IDE degradation, the resulting products initially increase the activation of NPR1 and can also stimulate NPR2 to produce cGMP before the fragments are completely degraded and inactivated by IDE (in vitro). In terms of processing, O-glycosylated on at least seven residues. In cardiomyocytes, glycosylation at Thr-97 is essential for the stability and processing of the extracellular natriuretic peptides B. Glycosylation, especially at Thr-97, may also be important for brain natriuretic peptide 32 stability and/or extracellular distribution. Glycosylation at Thr-97 appears to inhibit FURIN- or CORIN-mediated proteolytic processing, at least in HEK293 cells. Detected in the cardiac atria (at protein level). Detected in the kidney distal tubular cells (at protein level).

It is found in the secreted. In terms of biological role, cardiac hormone that plays a key role in mediating cardio-renal homeostasis. May also function as a paracrine antifibrotic factor in the heart. Acts by specifically binding and stimulating NPR1 to produce cGMP, which in turn activates effector proteins that drive various biological responses. Involved in regulating the extracellular fluid volume and maintaining the fluid-electrolyte balance through natriuresis, diuresis, vasorelaxation, and inhibition of renin and aldosterone secretion. Binds the clearance receptor NPR3. Its function is as follows. May affect cardio-renal homeostasis. Able to promote the production of cGMP although its potency is very low compared to brain natriuretic peptide 32. May have a role in cardio-renal homeostasis. Able to promote the production of cGMP. The sequence is that of Natriuretic peptides B (NPPB) from Homo sapiens (Human).